The following is a 236-amino-acid chain: MTKQLILENVSFRYGKTGPWIVDHVSCEVHSGDFIGIIGPNGGGKTTLTQLMLGLLQPVCGKIFTCFTQENRPLSIGWVPQHFAYDAAFPITVKETVLSGRLATLPWYGRYTKKDHDAAEEALHTVDLLEYKDSCFSHLSGGQIQRVLLARALSARPKFLLLDEPTANIDPSNQQKILQILSDLNKHCTILMITHDLHHTAGCFNRVFFMNKKLTALADTTTISERFCCNTFGKCS.

In terms of domain architecture, ABC transporter spans 5 to 236; sequence LILENVSFRY…FCCNTFGKCS (232 aa). Position 39 to 46 (39 to 46) interacts with ATP; the sequence is GPNGGGKT.

It belongs to the ABC transporter superfamily.

Its subcellular location is the cell inner membrane. In terms of biological role, part of an ATP-driven transport system TC_0696/TC_0697/TC_0698 for a metal. Probably responsible for energy coupling to the transport system. This is Probable metal transport system ATP-binding protein TC_0697 from Chlamydia muridarum (strain MoPn / Nigg).